We begin with the raw amino-acid sequence, 989 residues long: DEAD-box ATP-dependent RNA helicase 45 (989 aa).

Basic and acidic residues-rich tracts occupy residues 1 to 39 (MLEK…KRCD) and 64 to 101 (RDSK…EKEK). Disordered stretches follow at residues 1–248 (MLEK…AADE) and 305–330 (QGED…DDEE). Residues 88–182 (LKRDRERRER…ELKRQNEEAQ (95 aa)) adopt a coiled-coil conformation. A Phosphoserine modification is found at S119. Residues 134–179 (SRHGDDDVEKKTRDEQVEDEQKQLAEEVEKRRRRVQEWQELKRQNE) are compositionally biased toward basic and acidic residues. S200 carries the phosphoserine modification. The segment covering 203-222 (EVKSDSEMDVDRDTKLENGG) has biased composition (basic and acidic residues). Residues 230–239 (ENETAVTVSE) show a composition bias toward polar residues. The segment covering 321–330 (DPSLDEDDEE) has biased composition (acidic residues). A Q motif motif is present at residues 396 to 424 (QFWHQTGLTSKILDTLKKLNYEKPMPIQA). The 179-residue stretch at 427 to 605 (LPIIMSGRDC…RKVLNKPVEI (179 aa)) folds into the Helicase ATP-binding domain. 440–447 (AKTGSGKT) lines the ATP pocket. A DEAD box motif is present at residues 553-556 (DEAD). The Helicase C-terminal domain occupies 590–748 (QVETLARKVL…PVPDDVKAVA (159 aa)).

The protein belongs to the DEAD box helicase family. DDX46/PRP5 subfamily.

The catalysed reaction is ATP + H2O = ADP + phosphate + H(+). This chain is DEAD-box ATP-dependent RNA helicase 45 (RH45), found in Arabidopsis thaliana (Mouse-ear cress).